The chain runs to 686 residues: MGPRSRQRRTGTVQSTNDSSSLSKRSLAAQGYVSDAFAPLLVPGIVRRTPLIHRGYYVRARAVRHCVRAFLDLTGAIRSPTRAQILSLGSGSDSLYFRLKAAGLLTRTAVWEVDFPDVSRLKAKRIEETPELCAQTGPFKIGDSASTLCFESSDYRILGADLRELQRLGEALDSAGLDATSPTLILAEAVLTYLEPSRAAALIAWVAQRFPNALFVIYEQMKPGDAFGQIMLQHFRRLNSPLHGLELFPDVEAQRQRFLQAGWTTCSALDLNEFYRRLIPADERRRVETLEPFDEFEEWHLKCSHYFILAASRGDILSETPVFLPSEASFQIDPALPSGFLSASVVTSDHQHSSLQRYGHTSVLLSPGIIFSAGGFGEQEGRHCRVSRFHLLSRSCDSEWKGCQISTLGTEGQWDGRLYHTMTRLSDTRVLVLGGRLSPVNPASGALQLDIYKSEDNCPEGQNVVVTKAALEEGSMLSCWRHSTTEVYYQNQRYLFVYGGRSVTDPVLSDCRFLHVETMAWVRIPVQGSSPEGRHSHSACSWQGGALIAGGLGASEEPLSSVFFLRPVSSGFLWESIHIQPSITPRYSHTAHVFNGKLLLVGGVWIHSSSVPGVTVISLTTGLSSEYQIDTASVPWPLMLHNHSSALLPEEQQLLLIGGGGNCFSFGTYFNPHTVGLDLSSLGLGQ.

The disordered stretch occupies residues M1–L22. Residues T10–L22 are compositionally biased toward polar residues. S-adenosyl-L-methionine is bound by residues R59, G89, D114, D161–L162, and E188.

The protein belongs to the methyltransferase superfamily. LCMT family. Interacts with RNF144B/IBRDC2.

It carries out the reaction 7-[(3S)-3-amino-3-carboxypropyl]wyosine(37) in tRNA(Phe) + S-adenosyl-L-methionine = 7-[(3S)-(3-amino-3-methoxycarbonyl)propyl]wyosine(37) in tRNA(Phe) + S-adenosyl-L-homocysteine. The enzyme catalyses 7-[(3S)-(3-amino-3-methoxycarbonyl)propyl]wyosine(37) in tRNA(Phe) + S-adenosyl-L-methionine + CO2 = wybutosine(37) in tRNA(Phe) + S-adenosyl-L-homocysteine + 2 H(+). It participates in tRNA modification; wybutosine-tRNA(Phe) biosynthesis. Functionally, probable S-adenosyl-L-methionine-dependent methyltransferase that acts as a component of the wybutosine biosynthesis pathway. Wybutosine is a hyper modified guanosine with a tricyclic base found at the 3'-position adjacent to the anticodon of eukaryotic phenylalanine tRNA. May methylate the carboxyl group of leucine residues to form alpha-leucine ester residues. The sequence is that of tRNA wybutosine-synthesizing protein 4 (Lcmt2) from Rattus norvegicus (Rat).